An 845-amino-acid polypeptide reads, in one-letter code: AdoMet-dependent rRNA methyltransferase SPB1 (845 aa).

The S-adenosyl-L-methionine site is built by G58, W60, D78, D94, and D119. The Proton acceptor role is filled by K159. Disordered regions lie at residues 223–247 (GGGN…SQRQ) and 279–298 (SLNK…DDDH). Coiled coils occupy residues 366-402 (TEEQ…KEII) and 464-502 (DEEE…ERDA). Over residues 496–512 (RKAERDANYRAKQARGD) the composition is skewed to basic and acidic residues. 3 disordered regions span residues 496 to 546 (RKAE…DDDE), 587 to 660 (ENKT…HQQK), and 788 to 821 (KLNK…VKGK). 4 stretches are compositionally biased toward acidic residues: residues 513 to 528 (ADDE…NDDV), 536 to 545 (MESESDDDDD), 610 to 624 (NEND…ESDF), and 633 to 648 (DDDD…DDEV). Residues 739 to 796 (IKKVLEAQSRKKLRALKRLEKIKKKSDLINEDSGKSERDKADEISKLMKKLNKKQKQK) are a coiled coil. A compositionally biased stretch (basic residues) spans 788-797 (KLNKKQKQKP).

It belongs to the class I-like SAM-binding methyltransferase superfamily. RNA methyltransferase RlmE family. SPB1 subfamily. Component of the nucleolar and nucleoplasmic pre-60S ribosomal particle.

The protein resides in the nucleus. The protein localises to the nucleolus. The catalysed reaction is a ribonucleotide in rRNA + S-adenosyl-L-methionine = a 2'-O-methylribonucleotide in rRNA + S-adenosyl-L-homocysteine + H(+). Its function is as follows. Required for proper assembly of pre-ribosomal particles during the biogenesis of the 60S ribosomal subunit. The sequence is that of AdoMet-dependent rRNA methyltransferase SPB1 from Candida albicans (strain SC5314 / ATCC MYA-2876) (Yeast).